Reading from the N-terminus, the 181-residue chain is Urease accessory protein UreE (181 aa).

The tract at residues 143-181 (FDPEPGAYNQAGQGHSHGHSHGHSHNHDHEHSHGHKHAH) is disordered.

It belongs to the UreE family.

It localises to the cytoplasm. Its function is as follows. Involved in urease metallocenter assembly. Binds nickel. Probably functions as a nickel donor during metallocenter assembly. In Marinobacter nauticus (strain ATCC 700491 / DSM 11845 / VT8) (Marinobacter aquaeolei), this protein is Urease accessory protein UreE.